A 197-amino-acid chain; its full sequence is Nascent polypeptide-associated complex subunit alpha (197 aa).

Basic and acidic residues predominate over residues 1 to 18 (MTGSTETRHNEKDVKEPQ). The interval 1–30 (MTGSTETRHNEKDVKEPQVDSDADSDNEAI) is disordered. A compositionally biased stretch (acidic residues) spans 19 to 28 (VDSDADSDNE). The 66-residue stretch at 58–123 (SRSEKKARKL…AKIEDLTQHA (66 aa)) folds into the NAC-A/B domain. The segment at 134–155 (TREAPQLKTVEEDDNEDVEEDS) is disordered. Acidic residues predominate over residues 144–155 (EEDDNEDVEEDS). Residues 158-195 (IEEKDIELVISQANTTRNKAIRALKDADNDIVNAIMSL) form the UBA domain.

This sequence belongs to the NAC-alpha family.

May promote appropriate targeting of ribosome-nascent polypeptide complexes. This is Nascent polypeptide-associated complex subunit alpha from Caenorhabditis briggsae.